Here is a 100-residue protein sequence, read N- to C-terminus: Aspartyl/glutamyl-tRNA(Asn/Gln) amidotransferase subunit C (100 aa).

This sequence belongs to the GatC family. As to quaternary structure, heterotrimer of A, B and C subunits.

The enzyme catalyses L-glutamyl-tRNA(Gln) + L-glutamine + ATP + H2O = L-glutaminyl-tRNA(Gln) + L-glutamate + ADP + phosphate + H(+). It catalyses the reaction L-aspartyl-tRNA(Asn) + L-glutamine + ATP + H2O = L-asparaginyl-tRNA(Asn) + L-glutamate + ADP + phosphate + 2 H(+). Allows the formation of correctly charged Asn-tRNA(Asn) or Gln-tRNA(Gln) through the transamidation of misacylated Asp-tRNA(Asn) or Glu-tRNA(Gln) in organisms which lack either or both of asparaginyl-tRNA or glutaminyl-tRNA synthetases. The reaction takes place in the presence of glutamine and ATP through an activated phospho-Asp-tRNA(Asn) or phospho-Glu-tRNA(Gln). This is Aspartyl/glutamyl-tRNA(Asn/Gln) amidotransferase subunit C from Novosphingobium aromaticivorans (strain ATCC 700278 / DSM 12444 / CCUG 56034 / CIP 105152 / NBRC 16084 / F199).